A 312-amino-acid chain; its full sequence is Ribose-phosphate pyrophosphokinase (312 aa).

Residues aspartate 34–glutamate 36 and arginine 93–glutamine 94 each bind ATP. Positions 127 and 167 each coordinate Mg(2+). Lysine 191 is a catalytic residue. D-ribose 5-phosphate-binding positions include arginine 193, aspartate 217, and aspartate 221 to threonine 225.

It belongs to the ribose-phosphate pyrophosphokinase family. Class I subfamily. As to quaternary structure, homohexamer. Requires Mg(2+) as cofactor.

Its subcellular location is the cytoplasm. The enzyme catalyses D-ribose 5-phosphate + ATP = 5-phospho-alpha-D-ribose 1-diphosphate + AMP + H(+). It functions in the pathway metabolic intermediate biosynthesis; 5-phospho-alpha-D-ribose 1-diphosphate biosynthesis; 5-phospho-alpha-D-ribose 1-diphosphate from D-ribose 5-phosphate (route I): step 1/1. In terms of biological role, involved in the biosynthesis of the central metabolite phospho-alpha-D-ribosyl-1-pyrophosphate (PRPP) via the transfer of pyrophosphoryl group from ATP to 1-hydroxyl of ribose-5-phosphate (Rib-5-P). The chain is Ribose-phosphate pyrophosphokinase from Hyphomonas neptunium (strain ATCC 15444).